Here is a 135-residue protein sequence, read N- to C-terminus: Helix-loop-helix protein 2 (135 aa).

A disordered region spans residues Met1–Ser80. Over residues Asp10 to Pro21 the composition is skewed to basic and acidic residues. Residues Lys68–Ser80 show a composition bias toward basic residues. Residues Lys77–Leu129 enclose the bHLH domain.

Homodimer. Interacts and may form heterodimers with STAT3.

It localises to the nucleus. Functionally, transcription factor which binds the E box motif 5'-CA[TC][AG]TG-3'. Involved in regulating energy expenditure, body mass, voluntary physical activity, mating behavior and reproductive longevity, acting through the hypothalamic-pituitary-gonadal axis. Acts as a transcriptional activator of target genes, including NDN, PCSK1, MC4R. Is also a transcriptional activator of KISS1. May act centrally to regulate function of both white and brown adipose tissue. Together with NHLH1, required to maintain migration and survival of cells in the anterior extramural migration stream (aes), which forms the precerebellar nuclei. Also, in concert with NHLH1, may determine fate of gonadotropin releasing hormone-1 (GnRH-1) neurons. The polypeptide is Helix-loop-helix protein 2 (NHLH2) (Homo sapiens (Human)).